The primary structure comprises 458 residues: uncharacterized protein (458 aa).

The TRAM domain maps to 5 to 65 (QAPVNKNDVV…KGYGFGRVLN (61 aa)). Residues cysteine 78, cysteine 84, cysteine 87, and cysteine 165 each contribute to the [4Fe-4S] cluster site. S-adenosyl-L-methionine is bound by residues glutamine 289, tyrosine 318, glutamate 339, and aspartate 387. Residue cysteine 414 is the Nucleophile of the active site.

It belongs to the class I-like SAM-binding methyltransferase superfamily. RNA M5U methyltransferase family.

This is an uncharacterized protein from Halalkalibacterium halodurans (strain ATCC BAA-125 / DSM 18197 / FERM 7344 / JCM 9153 / C-125) (Bacillus halodurans).